Consider the following 605-residue polypeptide: NADH-ubiquinone oxidoreductase chain 5 (605 aa).

15 helical membrane-spanning segments follow: residues 8–28 (TLLS…YPYT), 34–54 (IYVK…TMIF), 87–107 (MILM…SMWY), 117–137 (FFKY…ANNL), 140–160 (LFIG…WWYG), 171–191 (AILY…WFLF), 241–261 (TPVS…FLLI), 273–293 (IQTM…ICAL), 301–321 (IVAF…GINQ), 324–344 (LAFL…LCSG), 366–386 (LPFT…MPFL), 409–429 (LFIT…IIYF), 457–477 (LLVG…PTTI), 482–502 (MPTY…IVAL), and 584–604 (IKLY…MLNF).

This sequence belongs to the complex I subunit 5 family. As to quaternary structure, core subunit of respiratory chain NADH dehydrogenase (Complex I) which is composed of 45 different subunits.

Its subcellular location is the mitochondrion inner membrane. The enzyme catalyses a ubiquinone + NADH + 5 H(+)(in) = a ubiquinol + NAD(+) + 4 H(+)(out). Functionally, core subunit of the mitochondrial membrane respiratory chain NADH dehydrogenase (Complex I) which catalyzes electron transfer from NADH through the respiratory chain, using ubiquinone as an electron acceptor. Essential for the catalytic activity and assembly of complex I. The sequence is that of NADH-ubiquinone oxidoreductase chain 5 (MT-ND5) from Rousettus amplexicaudatus (Common rousette).